We begin with the raw amino-acid sequence, 331 residues long: Putative phosphoribosylaminoimidazole-succinocarboxamide synthase (331 aa).

The protein belongs to the SAICAR synthetase family. Highly divergent.

It catalyses the reaction 5-amino-1-(5-phospho-D-ribosyl)imidazole-4-carboxylate + L-aspartate + ATP = (2S)-2-[5-amino-1-(5-phospho-beta-D-ribosyl)imidazole-4-carboxamido]succinate + ADP + phosphate + 2 H(+). It participates in purine metabolism; IMP biosynthesis via de novo pathway; 5-amino-1-(5-phospho-D-ribosyl)imidazole-4-carboxamide from 5-amino-1-(5-phospho-D-ribosyl)imidazole-4-carboxylate: step 1/2. The sequence is that of Putative phosphoribosylaminoimidazole-succinocarboxamide synthase (purC) from Archaeoglobus fulgidus (strain ATCC 49558 / DSM 4304 / JCM 9628 / NBRC 100126 / VC-16).